Here is a 541-residue protein sequence, read N- to C-terminus: Chaperonin GroEL (541 aa).

ATP contacts are provided by residues 29-32, 86-90, Gly-413, 477-479, and Asp-493; these read TLGP, DGTTT, and DAL.

Belongs to the chaperonin (HSP60) family. In terms of assembly, forms a cylinder of 14 subunits composed of two heptameric rings stacked back-to-back. Interacts with the co-chaperonin GroES.

It is found in the cytoplasm. It catalyses the reaction ATP + H2O + a folded polypeptide = ADP + phosphate + an unfolded polypeptide.. In terms of biological role, together with its co-chaperonin GroES, plays an essential role in assisting protein folding. The GroEL-GroES system forms a nano-cage that allows encapsulation of the non-native substrate proteins and provides a physical environment optimized to promote and accelerate protein folding. The chain is Chaperonin GroEL from Clostridium beijerinckii (strain ATCC 51743 / NCIMB 8052) (Clostridium acetobutylicum).